A 170-amino-acid polypeptide reads, in one-letter code: F107 fimbrial protein (170 aa).

A signal peptide spans 1-21; it reads MKRLVFISFVALSMTAGSAMA. A disulfide bridge links C37 with C78.

This sequence belongs to the fimbrial protein family.

The protein resides in the fimbrium. Its function is as follows. Fimbriae (also called pili), polar filaments radiating from the surface of the bacterium to a length of 0.5-1.5 micrometers and numbering 100-300 per cell, enable bacteria to colonize the epithelium of specific host organs. The polypeptide is F107 fimbrial protein (fedA) (Escherichia coli).